The primary structure comprises 1812 residues: Putative surface cell antigen sca2 (1812 aa).

The first 17 residues, 1 to 17, serve as a signal peptide directing secretion; the sequence is MSTCLLTSSFLSTSARA. Composition is skewed to polar residues over residues 344 to 357 and 371 to 382; these read FLNN…STGR and MSNQSIHNTGTS. Disordered stretches follow at residues 344-382, 648-691, and 1338-1462; these read FLNN…TGTS, LEQT…QGFS, and KQEN…KKDV. Residues 656 to 685 show a composition bias toward pro residues; that stretch reads PNPPPLPLNGGIPNPPPLPLNGSMPPPPPL. Composition is skewed to basic and acidic residues over residues 1349–1367 and 1382–1393; these read STKD…EQSD and SKNDKSSDDKKS. Residues 1401–1416 are compositionally biased toward acidic residues; sequence DEDDTGYATDEEELEE. Residues 1417–1455 show a composition bias toward low complexity; the sequence is SNSTTNEELEESNSTTNEELEESNSTTNEELEESNSTTN. The Autotransporter domain maps to 1533–1812; that stretch reads ETSINRGVWI…QGLIKLKVNL (280 aa).

The protein resides in the cell outer membrane. This Rickettsia sibirica (strain ATCC VR-151 / 246) protein is Putative surface cell antigen sca2 (sca2).